The chain runs to 267 residues: Tryptophan synthase alpha chain (267 aa).

Residues glutamate 49 and aspartate 60 each act as proton acceptor in the active site.

This sequence belongs to the TrpA family. In terms of assembly, tetramer of two alpha and two beta chains.

The catalysed reaction is (1S,2R)-1-C-(indol-3-yl)glycerol 3-phosphate + L-serine = D-glyceraldehyde 3-phosphate + L-tryptophan + H2O. It functions in the pathway amino-acid biosynthesis; L-tryptophan biosynthesis; L-tryptophan from chorismate: step 5/5. Functionally, the alpha subunit is responsible for the aldol cleavage of indoleglycerol phosphate to indole and glyceraldehyde 3-phosphate. In Acaryochloris marina (strain MBIC 11017), this protein is Tryptophan synthase alpha chain.